Consider the following 377-residue polypeptide: MKSVGLITEYNPFHNGHLFHATLSKQRSETNVTIAIMSGNFVMRGEPAIYHKFKRTEMALSAVDLVVELPLIGSLSSSDTFAEIAIKTAQYLDIDIISFGSESASLKDLQYLATQMIDYEKHPDFKEKLKQGKSYPRILSELTHNDTLLQSPNNILGISYLKAMQQFAPHMSALTIKREGSLHHQKVIDHHHFASGTSIRRSLMNDNVDWKNVVPNQIQSLYCKPHTTVEDTFPFIKHQLITQPKESLHSIYTINEGFENRLQTMIHRSDSFESLLSNLNTKRYTQTYIQRVLMNVLLNITKDDVNKEINAVRVLGMSEKGRSYLKYLKANYPNRHYITNVNQKTAHYFKNEIKATHVYNLLSNQSQTDFNTPLVRI.

ATP contacts are provided by residues Ile-7–His-20, Gly-100, Asn-153, and Arg-178.

Belongs to the TmcAL family.

The protein localises to the cytoplasm. It catalyses the reaction cytidine(34) in elongator tRNA(Met) + acetate + ATP = N(4)-acetylcytidine(34) in elongator tRNA(Met) + AMP + diphosphate. In terms of biological role, catalyzes the formation of N(4)-acetylcytidine (ac(4)C) at the wobble position of elongator tRNA(Met), using acetate and ATP as substrates. First activates an acetate ion to form acetyladenylate (Ac-AMP) and then transfers the acetyl group to tRNA to form ac(4)C34. This chain is tRNA(Met) cytidine acetate ligase, found in Staphylococcus epidermidis (strain ATCC 35984 / DSM 28319 / BCRC 17069 / CCUG 31568 / BM 3577 / RP62A).